The sequence spans 384 residues: Galactokinase (384 aa).

34 to 37 (EHTD) contributes to the substrate binding site. Position 123 to 129 (123 to 129 (SSGLSSS)) interacts with ATP. Residues S129 and E161 each coordinate Mg(2+). Catalysis depends on D173, which acts as the Proton acceptor. Residue Y222 participates in substrate binding.

The protein belongs to the GHMP kinase family. GalK subfamily.

The protein localises to the cytoplasm. The catalysed reaction is alpha-D-galactose + ATP = alpha-D-galactose 1-phosphate + ADP + H(+). The protein operates within carbohydrate metabolism; galactose metabolism. Catalyzes the transfer of the gamma-phosphate of ATP to D-galactose to form alpha-D-galactose-1-phosphate (Gal-1-P). The chain is Galactokinase from Glaesserella parasuis serovar 5 (strain SH0165) (Haemophilus parasuis).